Reading from the N-terminus, the 257-residue chain is Type III pantothenate kinase (257 aa).

6-13 (EQGNTNTL) lines the ATP pocket. A substrate-binding site is contributed by 107 to 110 (GADR). D109 acts as the Proton acceptor in catalysis. A K(+)-binding site is contributed by D129. ATP is bound at residue T132. T184 lines the substrate pocket.

This sequence belongs to the type III pantothenate kinase family. In terms of assembly, homodimer. NH4(+) is required as a cofactor. K(+) serves as cofactor.

The protein resides in the cytoplasm. The enzyme catalyses (R)-pantothenate + ATP = (R)-4'-phosphopantothenate + ADP + H(+). Its pathway is cofactor biosynthesis; coenzyme A biosynthesis; CoA from (R)-pantothenate: step 1/5. Functionally, catalyzes the phosphorylation of pantothenate (Pan), the first step in CoA biosynthesis. The sequence is that of Type III pantothenate kinase from Phenylobacterium zucineum (strain HLK1).